Consider the following 670-residue polypeptide: Septation protein 7 (670 aa).

Residues 33–357 (KGIKFTFMVV…ETYRTERLTK (325 aa)) form the Septin-type G domain. Residues 43 to 50 (GESGTGKT) form a G1 motif region. GTP-binding positions include 43–50 (GESGTGKT), Gly-137, 217–225 (KADSFTLNE), and Arg-306. Positions 134 to 137 (DTPG) are G3 motif. Residues 216–219 (GKAD) are G4 motif. 2 disordered regions span residues 383 to 513 (LNDS…QRNQ) and 574 to 670 (LNRQ…VSNH). A compositionally biased stretch (low complexity) spans 395 to 404 (NNNNNNNNNN). Residues 405–421 (ASTIPSMSNLAQLTTST) are compositionally biased toward polar residues. 2 stretches are compositionally biased toward low complexity: residues 433-446 (SITS…KSTS) and 463-473 (SSFTSSTSTVS). The stretch at 472–606 (VSLEGGEKEG…SVQSGGVDDG (135 aa)) forms a coiled coil. Positions 476 to 487 (GGEKEGGHHDRG) are enriched in basic and acidic residues. A compositionally biased stretch (low complexity) spans 489 to 500 (NSTSTNNNNNNN). Basic and acidic residues predominate over residues 631 to 645 (QSHEYDNSEYHHDDS).

The protein belongs to the TRAFAC class TrmE-Era-EngA-EngB-Septin-like GTPase superfamily. Septin GTPase family. In terms of assembly, component of the septin complex which consists of CDC3, CDC10, CDC11, CDC12 and probably SEP7. The purified septin complex appeared to have a stoichiometry of 2 CDC3, 1 to 2 CDC10, 1 CDC11, 2 CDC12, and 1 or none SEP7 subunit. Induction of hyphal growth brings about important modifications in septin ring dynamics, because the rings were found in a different state from those of yeast cells. This hyphal-specific state contains a core of stable septins (SEP7, CDC3, and CDC12), and it shows a high CDC10 turnover between the ring and the cytoplasm. Interacts with GIN4. Post-translationally, phosphorylated by GIN4 which stabilizes the GIN4-SEP7 interaction.

Its subcellular location is the bud neck. In terms of biological role, septins are GTPases involved in cytokinesis that assemble early in the cell cycle as a patch at the incipient bud site and form a ring before bud emergence, which transforms into an hour-glass shaped collar of cortical filaments that spans both sides of the mother-bud neck. This collar persists until just before cytokinesis, when it splits into two rings that occupy opposite sides of the neck. The septins at the bud neck serve as a structural scaffold that recruits different components involved in diverse processes at specific stages during the cell cycle. Many proteins bind asymmetrically to the septin collar. The septin assembly is regulated by protein kinase GIN4. Septins are also involved in cell morphogenesis, chlamydospores morphogenesis, bud site selection, chitin deposition, cell cycle regulation, cell compartmentalization and spore wall formation. SEP7 is required to convert hyphal septin rings into the hyphal-specific state and is necessary for CDC10 turnover during hyphal growth. The protein is Septation protein 7 (SEP7) of Candida albicans (strain SC5314 / ATCC MYA-2876) (Yeast).